The primary structure comprises 331 residues: Major outer membrane protein P.IB (331 aa).

The first 19 residues, 1 to 19 (MKKSLIALTLAALPVAAMA), serve as a signal peptide directing secretion.

Belongs to the Gram-negative porin family. Homotrimer.

It localises to the cell outer membrane. Its function is as follows. Serves as a slightly cation selective porin. This chain is Major outer membrane protein P.IB (porB), found in Neisseria meningitidis serogroup B.